A 575-amino-acid chain; its full sequence is Lysine--tRNA ligase (575 aa).

Positions 412 and 419 each coordinate Mg(2+).

The protein belongs to the class-II aminoacyl-tRNA synthetase family. Homodimer. The cofactor is Mg(2+).

It localises to the cytoplasm. The catalysed reaction is tRNA(Lys) + L-lysine + ATP = L-lysyl-tRNA(Lys) + AMP + diphosphate. The protein is Lysine--tRNA ligase of Bacteroides fragilis (strain YCH46).